We begin with the raw amino-acid sequence, 66 residues long: DNA-binding protein 7d (66 aa).

An N6-methyllysine; partial mark is found at Lys5 and Lys7.

It belongs to the 7 kDa DNA-binding/endoribonuclease P2 family. In terms of assembly, monomer. Post-translationally, lys-5 was 70% monomethylated in form 7a, 25% in form 7b, and 20% in form 7d. Lys-7 was 50% monomethylated in form 7a, 40% in form 7b, and 50% in form 7d.

The protein localises to the cytoplasm. Can constrain negative DNA supercoils. May be involved in maintaining the integrity of the genome at high temperature. This chain is DNA-binding protein 7d, found in Sulfolobus acidocaldarius (strain ATCC 33909 / DSM 639 / JCM 8929 / NBRC 15157 / NCIMB 11770).